A 710-amino-acid chain; its full sequence is MRYIVSPQLVLQVGKGQEVERALYLTPYDYIDEKSPIYYFLRSHLNIQQPEIVKRHILLTLRMTQLKGYLGNLLDIKDDIIIYSHKNNLEYSYVDNTIFNPFVYTQKKTLLKNDSFLYNVYPGACDFLVIWVVRACDTSIPEFGSYEDVDNNIIKFETMLMEVFPQLDLDITVESKFNNIFRTNLKLTGLKKIIQRVQDLDINYKSLLSRYDEHFINMTGNHFILNDEQLNLSIWDLDGTLALSSDGDTVMINNVKLFTDLVSDIDTQMERIKGDITYKVHLATPINSRIKLDIETSFIFIETATNNILLSSDKKISIILAKNHISIKVKNHIPNIEKYFTFLVIAINAMFNSVQKSADFTKVETVYWSRICQNTKNKNRKPIIINYLDPGMKKISNNFYRSDEKEVFINDNGIMFTCMDPLGKYNKVGFLNIFHDMRKYCIPCCFLHDQSHRSTFSSCVHQIDVEKKIVSPYILNFGKVVTESKMSFLPIIFDAFLNDGMTANMEQDNKRLKETSGYHIVRCCAGDDIVRLRTTSDIIQFVNEDKNILIVNDMVYFPMNASDIGKKIHILIQEIVHEVMIVKKKESSDKIDFFPPNYKLLKDLFPKQTIQTPIQSDAGMVLTTDGFYIDGKLFNEDLSSKYVTFTKNVIASDAVAKYFSPLFKYVISEAKDRFIKTWMINIMIHMNVDPNNIIPTLEKYYPNSGRAQIN.

Belongs to the poxviridae VETF large subunit family. In terms of assembly, heterodimer of a 70 kDa and a 82 kDa subunit. Part of the early transcription complex composed of ETF, RAP94/OPG109, and the DNA-directed RNA polymerase.

The protein localises to the virion. In terms of biological role, acts with RNA polymerase to initiate transcription from early gene promoters. Is recruited by the RPO-associated protein of 94 kDa RAP94/OPG109 to form the early transcription complex, which also contains the core RNA polymerase. ETF heterodimer binds to early gene promoters. The protein is Early transcription factor 82 kDa subunit (OPG133) of Homo sapiens (Human).